A 622-amino-acid chain; its full sequence is Wall-associated receptor kinase-like 21 (622 aa).

The first 21 residues, 1–21 (MAETPQPYLIFVFFVFTLTVA), serve as a signal peptide directing secretion. Residues 22–247 (TQTTGSVKCK…LVYKRKGLHK (226 aa)) are Extracellular-facing. Asparagine 50, asparagine 114, asparagine 131, asparagine 160, and asparagine 195 each carry an N-linked (GlcNAc...) asparagine glycan. The helical transmembrane segment at 248 to 268 (LVVLGTAGILVGVLVIVVLIA) threads the bilayer. At 269-622 (TYFFRNKQSA…MKRQQSFPRE (354 aa)) the chain is on the cytoplasmic side. The 281-residue stretch at 314-594 (FSDKNMLGTG…EITEDLHRIK (281 aa)) folds into the Protein kinase domain. ATP contacts are provided by residues 320-328 (LGTGAYGTV) and lysine 342. Aspartate 439 functions as the Proton acceptor in the catalytic mechanism.

Belongs to the protein kinase superfamily. Ser/Thr protein kinase family.

Its subcellular location is the membrane. The enzyme catalyses L-seryl-[protein] + ATP = O-phospho-L-seryl-[protein] + ADP + H(+). It catalyses the reaction L-threonyl-[protein] + ATP = O-phospho-L-threonyl-[protein] + ADP + H(+). Its function is as follows. Serine/threonine-protein kinase that may function as a signaling receptor of extracellular matrix component. In Arabidopsis thaliana (Mouse-ear cress), this protein is Wall-associated receptor kinase-like 21 (WAKL21).